The sequence spans 92 residues: DNA-directed RNA polymerase subunit Rpo11 (92 aa).

This sequence belongs to the archaeal Rpo11/eukaryotic RPB11/RPC19 RNA polymerase subunit family. In terms of assembly, part of the RNA polymerase complex.

It localises to the cytoplasm. It catalyses the reaction RNA(n) + a ribonucleoside 5'-triphosphate = RNA(n+1) + diphosphate. In terms of biological role, DNA-dependent RNA polymerase (RNAP) catalyzes the transcription of DNA into RNA using the four ribonucleoside triphosphates as substrates. The protein is DNA-directed RNA polymerase subunit Rpo11 of Saccharolobus islandicus (strain Y.N.15.51 / Yellowstone #2) (Sulfolobus islandicus).